Consider the following 79-residue polypeptide: Acyl carrier protein (79 aa).

One can recognise a Carrier domain in the interval 2–77 (SDIEERVKKI…SAIDYVNAHK (76 aa)). Position 37 is an O-(pantetheine 4'-phosphoryl)serine (Ser-37).

It belongs to the acyl carrier protein (ACP) family. 4'-phosphopantetheine is transferred from CoA to a specific serine of apo-ACP by AcpS. This modification is essential for activity because fatty acids are bound in thioester linkage to the sulfhydryl of the prosthetic group.

The protein resides in the cytoplasm. It functions in the pathway lipid metabolism; fatty acid biosynthesis. Carrier of the growing fatty acid chain in fatty acid biosynthesis. The sequence is that of Acyl carrier protein from Pseudoalteromonas atlantica (strain T6c / ATCC BAA-1087).